The chain runs to 347 residues: GMP reductase (347 aa).

108-131 contacts NADP(+); it reads ADFEKTVQILALNPALNFVCIDVA. The K(+) site is built by Gly181 and Gly183. Cys186 serves as the catalytic Thioimidate intermediate. Residue 216 to 239 coordinates NADP(+); sequence IVSDGGCTMPGDVAKAFGGGADFV.

It belongs to the IMPDH/GMPR family. GuaC type 1 subfamily. As to quaternary structure, homotetramer.

The enzyme catalyses IMP + NH4(+) + NADP(+) = GMP + NADPH + 2 H(+). Catalyzes the irreversible NADPH-dependent deamination of GMP to IMP. It functions in the conversion of nucleobase, nucleoside and nucleotide derivatives of G to A nucleotides, and in maintaining the intracellular balance of A and G nucleotides. This Salmonella typhi protein is GMP reductase.